Here is a 256-residue protein sequence, read N- to C-terminus: Thiazole synthase (256 aa).

Lys-97 serves as the catalytic Schiff-base intermediate with DXP. 1-deoxy-D-xylulose 5-phosphate contacts are provided by residues Gly-158, 184–185, and 206–207; these read AG and NT.

Belongs to the ThiG family. As to quaternary structure, homotetramer. Forms heterodimers with either ThiH or ThiS.

The protein resides in the cytoplasm. It catalyses the reaction [ThiS sulfur-carrier protein]-C-terminal-Gly-aminoethanethioate + 2-iminoacetate + 1-deoxy-D-xylulose 5-phosphate = [ThiS sulfur-carrier protein]-C-terminal Gly-Gly + 2-[(2R,5Z)-2-carboxy-4-methylthiazol-5(2H)-ylidene]ethyl phosphate + 2 H2O + H(+). The protein operates within cofactor biosynthesis; thiamine diphosphate biosynthesis. In terms of biological role, catalyzes the rearrangement of 1-deoxy-D-xylulose 5-phosphate (DXP) to produce the thiazole phosphate moiety of thiamine. Sulfur is provided by the thiocarboxylate moiety of the carrier protein ThiS. In vitro, sulfur can be provided by H(2)S. The protein is Thiazole synthase of Flavobacterium psychrophilum (strain ATCC 49511 / DSM 21280 / CIP 103535 / JIP02/86).